The primary structure comprises 83 residues: Mitochondrial import inner membrane translocase subunit Tim8 (83 aa).

Residues 35-60 carry the Twin CX3C motif motif; that stretch reads CWDVCFSDYRPPSKMDGKTQTCIQNC. 2 cysteine pairs are disulfide-bonded: Cys-35-Cys-60 and Cys-39-Cys-56.

It belongs to the small Tim family. As to quaternary structure, heterohexamer; composed of 3 copies of ddp-1/tim-8 and 3 copies of tin-13/tim-13, named soluble 70 kDa complex. Associates with the TIM22 complex, whose core is composed of tim-22.

Its subcellular location is the mitochondrion inner membrane. Functionally, mitochondrial intermembrane chaperone that participates in the import and insertion of some multi-pass transmembrane proteins into the mitochondrial inner membrane. Also required for the transfer of beta-barrel precursors from the TOM complex to the sorting and assembly machinery (SAM complex) of the outer membrane. Acts as a chaperone-like protein that protects the hydrophobic precursors from aggregation and guide them through the mitochondrial intermembrane space. The ddp-1/tim-8-tim-13 complex mediates the import of some proteins while the predominant tim-9/tin-9.1-tim-10/tin-10 70 kDa complex mediates the import of much more proteins. This Caenorhabditis briggsae protein is Mitochondrial import inner membrane translocase subunit Tim8.